We begin with the raw amino-acid sequence, 458 residues long: N-acetylgalactosamine kinase (458 aa).

Residues Arg43, Glu49, His50, and Asp52 each coordinate alpha-D-galactose. 3 residues coordinate ATP: Gly143, Ser145, and Ser146. Asp190 contacts alpha-D-galactose. Catalysis depends on Asp190, which acts as the Proton acceptor. ATP is bound by residues Asn233 and Lys234.

This sequence belongs to the GHMP kinase family. GalK subfamily. In terms of assembly, monomer.

It catalyses the reaction N-acetyl-alpha-D-galactosamine + ATP = N-acetyl-alpha-D-galactosamine 1-phosphate + ADP + H(+). Functionally, acts on GalNAc. Also acts as a galactokinase when galactose is present at high concentrations. May be involved in a salvage pathway for the reutilization of free GalNAc derived from the degradation of complex carbohydrates. In Homo sapiens (Human), this protein is N-acetylgalactosamine kinase (GALK2).